The primary structure comprises 253 residues: Ribosomal RNA small subunit methyltransferase A (253 aa).

Histidine 12, leucine 14, glycine 39, glutamate 60, aspartate 81, and asparagine 104 together coordinate S-adenosyl-L-methionine.

It belongs to the class I-like SAM-binding methyltransferase superfamily. rRNA adenine N(6)-methyltransferase family. RsmA subfamily.

Its subcellular location is the cytoplasm. It carries out the reaction adenosine(1518)/adenosine(1519) in 16S rRNA + 4 S-adenosyl-L-methionine = N(6)-dimethyladenosine(1518)/N(6)-dimethyladenosine(1519) in 16S rRNA + 4 S-adenosyl-L-homocysteine + 4 H(+). Functionally, specifically dimethylates two adjacent adenosines (A1518 and A1519) in the loop of a conserved hairpin near the 3'-end of 16S rRNA in the 30S particle. May play a critical role in biogenesis of 30S subunits. This chain is Ribosomal RNA small subunit methyltransferase A, found in Acidovorax ebreus (strain TPSY) (Diaphorobacter sp. (strain TPSY)).